The chain runs to 2174 residues: Spectinabilin polyketide synthase system protein NorB (2174 aa).

Residues 34 to 459 (REPVAVVAMG…GTNAHVILEQ (426 aa)) form the Ketosynthase family 3 (KS3) domain. Catalysis depends on for beta-ketoacyl synthase activity residues cysteine 206, histidine 341, and histidine 381. Residues 567–888 (FLFSGQGSQR…AAVSRAFVQG (322 aa)) enclose the Malonyl-CoA:ACP transacylase (MAT) domain. The interval 938–1060 (HPLLGACLEL…GQLAPEAAAP (123 aa)) is N-terminal hotdog fold. The 275-residue stretch at 938 to 1212 (HPLLGACLEL…TRPITAGQLR (275 aa)) folds into the PKS/mFAS DH domain. The Proton acceptor; for dehydratase activity role is filled by histidine 970. The segment at 1056–1075 (EAAAPPAAPGEDWPPPGAEP) is disordered. A compositionally biased stretch (pro residues) spans 1061–1074 (PAAPGEDWPPPGAE). A C-terminal hotdog fold region spans residues 1073 to 1212 (AEPVPLEGFY…TRPITAGQLR (140 aa)). Aspartate 1134 serves as the catalytic Proton donor; for dehydratase activity. Positions 1424–1726 (GTVDDLVLAP…QARNVGKLVL (303 aa)) constitute an Enoyl reductase (ER) domain. The Ketoreductase (KR) domain occupies 1736–1915 (GTILVTGGYG…ATALAWGMWA (180 aa)). One can recognise a Carrier domain in the interval 2017-2092 (PAVRELVRGQ…ALTDAIEARL (76 aa)). An O-(pantetheine 4'-phosphoryl)serine modification is found at serine 2052.

In terms of assembly, the spectinabilin polyketide synthase complex is composed of 4 proteins, NorA, NorA', NorB and NorC. The complex comprises 6 modules with a total of 28 catalytic domains catalyzing 7 chain elongations. NorA comprises one module, NorA' two modules, NorB one module and NorC two modules. Requires pantetheine 4'-phosphate as cofactor.

It catalyses the reaction 4-nitrobenzoyl-CoA + 6 (S)-methylmalonyl-CoA + malonyl-CoA + 6 NADPH + 12 H(+) = demethyldeoxyspectinabilin + 7 CO2 + 6 NADP(+) + 8 CoA + 5 H2O. The protein operates within antibiotic biosynthesis. It participates in polyketide biosynthesis. Component of a type I modular polyketide synthase (PKS) that generates the backbone of the antibiotic spectinabilin (also known as neoaureothin), a nitroaryl-substituted polyketide metabolite. This PKS system accepts the unusual starter unit 4-nitrobenzoyl-CoA and extends it by 6 molecules of (S)-methylmalonyl-CoA and a single molecule of malonyl-CoA. This is Spectinabilin polyketide synthase system protein NorB from Streptomyces orinoci (Streptoverticillium orinoci).